An 84-amino-acid chain; its full sequence is Small ribosomal subunit protein uS17 (84 aa).

Belongs to the universal ribosomal protein uS17 family. As to quaternary structure, part of the 30S ribosomal subunit.

One of the primary rRNA binding proteins, it binds specifically to the 5'-end of 16S ribosomal RNA. This Clostridioides difficile (strain 630) (Peptoclostridium difficile) protein is Small ribosomal subunit protein uS17.